The sequence spans 421 residues: Testin (421 aa).

The PET domain occupies Met-92–Asp-199. The tract at residues Glu-133–Cys-164 is disordered. The segment covering Pro-155–Cys-164 has biased composition (basic and acidic residues). LIM zinc-binding domains follow at residues Tyr-234–Glu-297, Pro-299–Val-359, and Gln-362–Ser-421.

The protein belongs to the prickle / espinas / testin family. As to quaternary structure, interacts via LIM domain 1 with ZYX. Interacts (via LIM domain 3) with ENAH and VASP. Interacts with ALKBH4, talin, actin, alpha-actinin, GRIP1 and PXN. Interacts (via LIM domain 2) with ACTL7A (via N-terminus). Heterodimer with ACTL7A; the heterodimer interacts with ENAH to form a heterotrimer.

It localises to the cytoplasm. Its subcellular location is the cell junction. The protein resides in the focal adhesion. Scaffold protein that may play a role in cell adhesion, cell spreading and in the reorganization of the actin cytoskeleton. Plays a role in the regulation of cell proliferation. May act as a tumor suppressor. The polypeptide is Testin (TES) (Equus caballus (Horse)).